We begin with the raw amino-acid sequence, 984 residues long: MORC family CW-type zinc finger protein 1 (984 aa).

A coiled-coil region spans residues 284-353 (AFKDEVKKAE…RELKTARTLS (70 aa)). Residues 477–531 (AMGIPFIIQCDLCLKWRVLPSSTNYQEKEFFDIWICANNPNRLENSCHQVECLPS) form a CW-type zinc finger. Zn(2+) is bound by residues C486, C489, C512, and C523. 2 coiled-coil regions span residues 737 to 761 (DVSL…CNDV) and 900 to 934 (EISL…LQLG).

Its subcellular location is the nucleus. Functionally, required for spermatogenesis. Essential for de novo DNA methylation and silencing of transposable elements in the male embryonic germ cells. The polypeptide is MORC family CW-type zinc finger protein 1 (Homo sapiens (Human)).